The primary structure comprises 240 residues: tRNA (guanine-N(7)-)-methyltransferase (240 aa).

The disordered stretch occupies residues 1-20 (MTESHDTPITPDGEARPHRR). S-adenosyl-L-methionine contacts are provided by E70, E95, D122, and D145. The active site involves D145. Residues K149, D181, and 218-221 (TKFE) contribute to the substrate site.

It belongs to the class I-like SAM-binding methyltransferase superfamily. TrmB family.

The catalysed reaction is guanosine(46) in tRNA + S-adenosyl-L-methionine = N(7)-methylguanosine(46) in tRNA + S-adenosyl-L-homocysteine. The protein operates within tRNA modification; N(7)-methylguanine-tRNA biosynthesis. Its function is as follows. Catalyzes the formation of N(7)-methylguanine at position 46 (m7G46) in tRNA. This Pseudomonas putida (strain ATCC 47054 / DSM 6125 / CFBP 8728 / NCIMB 11950 / KT2440) protein is tRNA (guanine-N(7)-)-methyltransferase.